The chain runs to 514 residues: Mitochondrial-processing peptidase subunit alpha (514 aa).

The transit peptide at 1–55 directs the protein to the mitochondrion; the sequence is MLLRKSIPYIKICRDISASVRNNKEIAQKLPLSVPLPMENNSKSIEKGCPPMGRN.

The protein belongs to the peptidase M16 family. Heterodimer of mppa-1 (alpha) and mppb-1 (beta) subunits, forming the mitochondrial processing protease (MPP) in which mppa-1 is involved in substrate recognition and binding and mppb-1 is the catalytic subunit.

Its subcellular location is the mitochondrion matrix. Substrate recognition and binding subunit of the essential mitochondrial processing protease (MPP), which cleaves the mitochondrial sequence off newly imported precursors proteins. This is Mitochondrial-processing peptidase subunit alpha from Caenorhabditis elegans.